The primary structure comprises 589 residues: Intermediate filament protein B (589 aa).

The interval 1-84 (SLKQSQESSE…LEATDKEKKE (84 aa)) is head. The 353-residue stretch at 81-433 (EKKEMQGLND…KMLEGEESRV (353 aa)) folds into the IF rod domain. The tract at residues 85–116 (MQGLNDRLGNYIDRVKKLEEQNRKLVADLDEL) is coil 1A. A linker 1 region spans residues 117 to 130 (RGRWGKDTSEIKIQ). Residues 131–268 (YSDSLRDARK…RVHEQEVKEL (138 aa)) are coil 1B. Residues 269-285 (QALLAQAPADTREFFKN) are linker 12. The segment at 286 to 433 (ELALAIRDIK…KMLEGEESRV (148 aa)) is coil 2. The tail stretch occupies residues 434–589 (GLRQMVEQVV…HTQKTIQTGQ (156 aa)). The disordered stretch occupies residues 446-470 (HSLQQQEDTDSTRNVRGEVSTKTTF). The region spanning 466–584 (TKTTFQRSAK…DERATHTQKT (119 aa)) is the LTD domain.

Belongs to the intermediate filament family. As to quaternary structure, a and B can form homopolymers. Giant body muscle cells.

Its subcellular location is the cytoplasm. This chain is Intermediate filament protein B, found in Ascaris suum (Pig roundworm).